The primary structure comprises 207 residues: Large ribosomal subunit protein bL20 (207 aa).

Residues 117–161 (QETQPQPEEKTSLQPEKVLSTELSEEKSDDTLETKPQTTQVKAKK) form a disordered region. Basic and acidic residues predominate over residues 140–149 (SEEKSDDTLE).

This sequence belongs to the bacterial ribosomal protein bL20 family.

In terms of biological role, binds directly to 23S ribosomal RNA and is necessary for the in vitro assembly process of the 50S ribosomal subunit. It is not involved in the protein synthesizing functions of that subunit. In Onion yellows phytoplasma (strain OY-M), this protein is Large ribosomal subunit protein bL20.